The chain runs to 117 residues: Large ribosomal subunit protein bL20 (117 aa).

It belongs to the bacterial ribosomal protein bL20 family.

Binds directly to 23S ribosomal RNA and is necessary for the in vitro assembly process of the 50S ribosomal subunit. It is not involved in the protein synthesizing functions of that subunit. This chain is Large ribosomal subunit protein bL20, found in Lawsonia intracellularis (strain PHE/MN1-00).